The sequence spans 61 residues: UPF0434 protein Pmen_1615 (61 aa).

Belongs to the UPF0434 family.

This Ectopseudomonas mendocina (strain ymp) (Pseudomonas mendocina) protein is UPF0434 protein Pmen_1615.